A 202-amino-acid polypeptide reads, in one-letter code: Prephenate decarboxylase (202 aa).

This sequence belongs to the prephenate decarboxylase family.

It catalyses the reaction prephenate + H(+) = 3-[(4R)-4-hydroxycyclohexa-1,5-dien-1-yl]-2-oxopropanoate + CO2. In vivo, involved in the biosynthesis of 2-carboxy-6-hydroxyoctahydroindole (Choi) present in the nonribosomal glycopeptides aeruginoside 126A and B. AerD is an unusual prephenate decarboxylase that avoids the typical aromatization of the cyclohexadienol ring of prephenate. AerD catalyzes the protonation at C8 followed by decarboxylation to produce the dihydro-4-hydroxyphenylpyruvate regioisomer A258 (H2HPP A258)(3-(4-hydroxycyclohexa- 1,5-dienyl)-2-oxopropanoic acid), which is able to undergo a nonenzymatic isomerization to produce dihydro-4-hydroxyphenylpyruvate regioisomer A295 (H2HPP A295)(3-(4-hydroxycyclohex-2-enylidene)-2-oxopropanoic acid). The protein is Prephenate decarboxylase of Planktothrix agardhii (strain NIVA-CYA 126/8).